A 271-amino-acid chain; its full sequence is Putative phosphoenolpyruvate synthase regulatory protein (271 aa).

152–159 (GASRSGKT) serves as a coordination point for ADP.

The protein belongs to the pyruvate, phosphate/water dikinase regulatory protein family. PSRP subfamily.

The enzyme catalyses [pyruvate, water dikinase] + ADP = [pyruvate, water dikinase]-phosphate + AMP + H(+). It catalyses the reaction [pyruvate, water dikinase]-phosphate + phosphate + H(+) = [pyruvate, water dikinase] + diphosphate. Bifunctional serine/threonine kinase and phosphorylase involved in the regulation of the phosphoenolpyruvate synthase (PEPS) by catalyzing its phosphorylation/dephosphorylation. The sequence is that of Putative phosphoenolpyruvate synthase regulatory protein from Marinobacter nauticus (strain ATCC 700491 / DSM 11845 / VT8) (Marinobacter aquaeolei).